A 770-amino-acid polypeptide reads, in one-letter code: MDEEKLPCELHKEGSATQEDHGLEPEEEPGLQNGTAASEGLSSHISGPGGEKTLEGTMEPVRGPDVALPGLNLSLTNGLALGQDGNILEDSIEFKTWRSGPAEEEDVPGSPCPDAGDPQLGLDCPGEPDVRDGFSATFEKILESELLRGTQYSSLDSLDVLSLTDESDSCVSFEAPLTPLIQQRARDSPEAGAGLGNGDMGPEGDLGATGGCDGELGSPLRRSISSSRSENVLSHLSLTSVPNGFHEDGPGGSGGDDEDDEDTDKLLNSASDTSLKDGLSDSDSELSSSEGLEPGSTDPLANGCQGVSEAARRLARRLYHLEGFQRCDVARQLGKNNEFSRLVAGEYLSFFDFSGLTLDRALRTFLKAFPLMGETQERERVLTHFSRRYCQCNPDDSTSEDGIHTLTCALMLLNTDLHGHNIGKKMSCQQFIANLDQLNDGQDFAKDLLKTLYNSIKNEKLEWAIDEDELRKSLSELVDDKFGTGTKKVTRILDGGNPFLDVPQALNATTYKHGVLTRKTHADMDGKRTPRGRRGWKKFYAVLKGTILYLQKDEYRLDKALSEGDLKNAIRVHHALATRASDYSKKSNVLKLKTADWRVFLFQAPSKEEMLSWILRINLVAAIFSAPAFPAAVSSMKKFCRPLLPSCTTRLCQEEQLRSHENKLRQVTAELAEHRCHPLERGLKSKEAEEYRLKEHYLTFEKSRYETYIHLLAVKIKVGSDDLERIEARLATIEGDDPALRKTHSSPALSLGHGPVTGSKATKDTSASDT.

The segment covering 1–24 (MDEEKLPCELHKEGSATQEDHGLE) has biased composition (basic and acidic residues). Disordered regions lie at residues 1-65 (MDEE…RGPD) and 181-304 (IQQR…ANGC). The segment covering 32-45 (QNGTAASEGLSSHI) has biased composition (polar residues). At Ser-188 the chain carries Phosphoserine. Low complexity-rich tracts occupy residues 216–234 (LGSP…NVLS) and 285–296 (ELSSSEGLEPGS). The SEC7 domain maps to 256–459 (DDEDDEDTDK…KTLYNSIKNE (204 aa)). In terms of domain architecture, PH spans 509–622 (TTYKHGVLTR…WILRINLVAA (114 aa)). Residues 619–636 (LVAAIFSAPAFPAAVSSM) traverse the membrane as a helical segment. A coiled-coil region spans residues 650-677 (RLCQEEQLRSHENKLRQVTAELAEHRCH). The disordered stretch occupies residues 738–770 (PALRKTHSSPALSLGHGPVTGSKATKDTSASDT).

This sequence belongs to the PSD family.

Its subcellular location is the cell membrane. The protein resides in the cell projection. The protein localises to the ruffle membrane. It localises to the cleavage furrow. This is PH and SEC7 domain-containing protein 2 (Psd2) from Mus musculus (Mouse).